Here is a 442-residue protein sequence, read N- to C-terminus: L-seryl-tRNA(Sec) selenium transferase (442 aa).

Lys284 is modified (N6-(pyridoxal phosphate)lysine).

The protein belongs to the SelA family. Requires pyridoxal 5'-phosphate as cofactor.

Its subcellular location is the cytoplasm. The enzyme catalyses L-seryl-tRNA(Sec) + selenophosphate + H(+) = L-selenocysteinyl-tRNA(Sec) + phosphate. Its pathway is aminoacyl-tRNA biosynthesis; selenocysteinyl-tRNA(Sec) biosynthesis; selenocysteinyl-tRNA(Sec) from L-seryl-tRNA(Sec) (bacterial route): step 1/1. In terms of biological role, converts seryl-tRNA(Sec) to selenocysteinyl-tRNA(Sec) required for selenoprotein biosynthesis. This chain is L-seryl-tRNA(Sec) selenium transferase, found in Campylobacter fetus subsp. fetus (strain 82-40).